The following is a 251-amino-acid chain: MSGHSKWATTKHKKAVIDARRGKMFARLIKNIEVAARVGGGDPVGNPTLYDAIQKAKKSSVPNGNIERARKRGAGEEVGGADWQVITYEGYAPNGVAVLIECLTDNRNRAAGEVRVAMTRNGGAMADPGSVAYLFSRKGVVTLEKNGLTEDDVLAAVLDAGAEEVNDLGDSFEVIAEPGDLVAVRTALQDAGIDYESAEASFQPSVSMPVDLDGARKVFKLVDALEDSDDVHNVWTNADVSDEVLAALDGE.

It belongs to the TACO1 family.

The protein localises to the cytoplasm. This Mycobacterium leprae (strain Br4923) protein is Probable transcriptional regulatory protein MLBr00475.